We begin with the raw amino-acid sequence, 376 residues long: Queuine tRNA-ribosyltransferase (376 aa).

D90 (proton acceptor) is an active-site residue. Substrate contacts are provided by residues D90–F94, D144, Q193, and G220. The RNA binding stretch occupies residues G251–D257. D270 functions as the Nucleophile in the catalytic mechanism. An RNA binding; important for wobble base 34 recognition region spans residues T275 to R279. C308, C310, C313, and H339 together coordinate Zn(2+).

It belongs to the queuine tRNA-ribosyltransferase family. In terms of assembly, homodimer. Within each dimer, one monomer is responsible for RNA recognition and catalysis, while the other monomer binds to the replacement base PreQ1. Requires Zn(2+) as cofactor.

The catalysed reaction is 7-aminomethyl-7-carbaguanine + guanosine(34) in tRNA = 7-aminomethyl-7-carbaguanosine(34) in tRNA + guanine. It functions in the pathway tRNA modification; tRNA-queuosine biosynthesis. In terms of biological role, catalyzes the base-exchange of a guanine (G) residue with the queuine precursor 7-aminomethyl-7-deazaguanine (PreQ1) at position 34 (anticodon wobble position) in tRNAs with GU(N) anticodons (tRNA-Asp, -Asn, -His and -Tyr). Catalysis occurs through a double-displacement mechanism. The nucleophile active site attacks the C1' of nucleotide 34 to detach the guanine base from the RNA, forming a covalent enzyme-RNA intermediate. The proton acceptor active site deprotonates the incoming PreQ1, allowing a nucleophilic attack on the C1' of the ribose to form the product. After dissociation, two additional enzymatic reactions on the tRNA convert PreQ1 to queuine (Q), resulting in the hypermodified nucleoside queuosine (7-(((4,5-cis-dihydroxy-2-cyclopenten-1-yl)amino)methyl)-7-deazaguanosine). This Cupriavidus pinatubonensis (strain JMP 134 / LMG 1197) (Cupriavidus necator (strain JMP 134)) protein is Queuine tRNA-ribosyltransferase.